Reading from the N-terminus, the 254-residue chain is DNA repair protein RecO (254 aa).

This sequence belongs to the RecO family.

Involved in DNA repair and RecF pathway recombination. The polypeptide is DNA repair protein RecO (Anaeromyxobacter sp. (strain K)).